The sequence spans 485 residues: ATP synthase subunit beta, cyanelle (485 aa).

162–169 (GGAGVGKT) contacts ATP.

The protein belongs to the ATPase alpha/beta chains family. F-type ATPases have 2 components, CF(1) - the catalytic core - and CF(0) - the membrane proton channel. CF(1) has five subunits: alpha(3), beta(3), gamma(1), delta(1), epsilon(1). CF(0) has four main subunits: a(1), b(1), b'(1) and c(9-12).

The protein localises to the plastid. The protein resides in the cyanelle thylakoid membrane. It catalyses the reaction ATP + H2O + 4 H(+)(in) = ADP + phosphate + 5 H(+)(out). Functionally, produces ATP from ADP in the presence of a proton gradient across the membrane. The catalytic sites are hosted primarily by the beta subunits. The chain is ATP synthase subunit beta, cyanelle from Cyanophora paradoxa.